We begin with the raw amino-acid sequence, 495 residues long: MAFEKNNEPFPLHFVLFPFMAQGHMIPMVDIARLLAQRGVLITIVTTPHNAARFKNVLNRAIESGLPINLVQVKFPYQEAGLQEGQENMDLLTTMEQITSFFKAVNLLKEPVQNLIEEMSPRPSCLISDMCLSYTSEIAKKFKIPKILFHGMGCFCLLCVNVLRKNREILDNLKSDKEYFIVPYFPDRVEFTRPQVPVETYVPAGWKEILEDMVEADKTSYGVIVNSFQELEPAYAKDFKEARSGKAWTIGPVSLCNKVGVDKAERGNKSDIDQDECLEWLDSKEPGSVLYVCLGSICNLPLSQLLELGLGLEESQRPFIWVIRGWEKYKELVEWFSESGFEDRIQDRGLLIKGWSPQMLILSHPSVGGFLTHCGWNSTLEGITAGLPMLTWPLFADQFCNEKLVVQILKVGVSAEVKEVMKWGEEEKIGVLVDKEGVKKAVEELMGESDDAKERRRRAKELGESAHKAVEEGGSSHSNITFLLQDIMQLAQSNN.

Residues serine 296, 356 to 358, 373 to 381, and 395 to 398 contribute to the UDP-alpha-D-glucose site; these read SPQ, HCGWNSTLE, and FADQ. The segment at 449 to 475 is disordered; the sequence is SDDAKERRRRAKELGESAHKAVEEGGS. Over residues 450-471 the composition is skewed to basic and acidic residues; sequence DDAKERRRRAKELGESAHKAVE.

It belongs to the UDP-glycosyltransferase family. As to expression, expressed in leaves and flowers, and at a very low level in roots.

Functionally, acts as a UDP-glucose:flavonol-3-O-glycoside-7-O-glucosyltransferase. 6- and 7-hydroxyflavone, but not 3- or 5-hydroxyflavone are accepted as substrates. Possesses low quercetin 3-O-glucosyltransferase, 7-O-glucosyltransferase and 4'-O-glucosyltransferase activities in vitro. The chain is UDP-glycosyltransferase 73C6 (UGT73C6) from Arabidopsis thaliana (Mouse-ear cress).